The primary structure comprises 644 residues: Heat shock protein SSC3, mitochondrial (644 aa).

This sequence belongs to the heat shock protein 70 family.

The protein resides in the mitochondrion matrix. It localises to the mitochondrion nucleoid. Functionally, plays a role in facilitating the assembly of some protein complexes inside the mitochondria. It may initiate the events that lead to refolding of imported precursors in the matrix space. The polypeptide is Heat shock protein SSC3, mitochondrial (ECM10) (Saccharomyces cerevisiae (strain ATCC 204508 / S288c) (Baker's yeast)).